A 328-amino-acid chain; its full sequence is UPF0421 protein SAUSA300_1870 (328 aa).

The next 4 membrane-spanning stretches (helical) occupy residues 19 to 39, 61 to 81, 108 to 128, and 132 to 152; these read IAIFLTAVFCMALDLTPIYAI, LPATVIGAGFAVLFTYLFGDQ, VAVLTSLAMIPGIHDAYIFNF, and TLTAIIGLVTSGLINFMVFPP.

Belongs to the UPF0421 family.

The protein resides in the cell membrane. This is UPF0421 protein SAUSA300_1870 from Staphylococcus aureus (strain USA300).